A 217-amino-acid chain; its full sequence is UPF0502 protein Smlt0097 (217 aa).

This sequence belongs to the UPF0502 family.

This Stenotrophomonas maltophilia (strain K279a) protein is UPF0502 protein Smlt0097.